The chain runs to 240 residues: RING finger protein 151 (240 aa).

The segment at 20-58 (CSVCHGVLKRPVRLPCSHIFCKKCILRWLARQKTCPCCR) adopts an RING-type zinc-finger fold. The segment at 101 to 156 (GHQDSCPFELMVCPNEGCMLRVPRGALDEHRQNCQHGAYHRCSLGCGATLGPVERA) adopts a TRAF-type zinc-finger fold.

The chain is RING finger protein 151 (RNF151) from Bos taurus (Bovine).